The primary structure comprises 340 residues: Sulfotransferase ppzF (340 aa).

Its pathway is secondary metabolite biosynthesis. Functionally, sulfotransferase; part of the gene cluster that mediates the biosynthesis of pyrrolopyrazines, secondary metabolites showing insecticidal activity. The role of ppzF within the pathway has still to be determined. The single multifunctional NRPS ppzA is sufficient to produce peramine via condensation of 1-pyrroline-5-carboxylate and arginine, N-methylation of the alpha-amino group of arginine and reduction of the thioester and the cyclization to form an iminium ion resulting in release from the peptide synthetase. Deprotonation of this intermediate and oxidation of the pyrroline ring would give rise to peramine. In Epichloe species that produce only peramine, the peramine synthetase gene is not localized in a gene cluster, in contrast to Metarhizium species that contain additional pyrrolopyrazine biosynthesis genes. The 2-oxoglutarate-Fe(II) type oxidoreductase ppzC hydroxylates peramine to yield the newly identified compound 8-hydroxyperamine whereas ppzD converts L-proline into trans-4-hydroxy-L-proline, a precursor of peramine biosynthesis. In Metarhizium rileyi (strain RCEF 4871) (Nomuraea rileyi), this protein is Sulfotransferase ppzF.